A 326-amino-acid polypeptide reads, in one-letter code: tRNA-modifying protein YgfZ (326 aa).

Residues Trp27 and Trp189 each contribute to the folate site.

Belongs to the tRNA-modifying YgfZ family.

The protein localises to the cytoplasm. In terms of biological role, folate-binding protein involved in regulating the level of ATP-DnaA and in the modification of some tRNAs. It is probably a key factor in regulatory networks that act via tRNA modification, such as initiation of chromosomal replication. In Escherichia coli (strain SMS-3-5 / SECEC), this protein is tRNA-modifying protein YgfZ.